Reading from the N-terminus, the 891-residue chain is MMPIKSIVTLDQLEDSEYLFRIVSTVLPHLCLDYKVCDQLKTTFVHPFDVFLNNSLGSVTKQDELQATISKLGINYLIDTTSRELKLFNVTLNAGNIDIINHPINISSETNPIINTHSFYDLPPFTQHLLNIRLTDTEYRARFIGGYIKPDGSDSMDVLAEKKYPDLNFDNTYLFNILYKDVINAPIKEFKAKIVNGVLSRQDFDNLIGVRQYITAQDQPRFDITYNIADAARHYGVNLNTLPLPNVDLTTMPTYKHLIMYEQYFVDDYDRVPIYYNGNRVIFNDEIINFTISMRYQSLIPRLVDFFPDIPVNNNIVLHTRDPQNAAVNVTVALPNVQFVDINRNNKFFINFFNLLAKEQRSTAIKVTKSMFWDGIDYEEYKSKTLQDMMFINSTCYVFGLYNHNNTTYCSILSDIISAEKTPIRVCLLPRVVGGKTVTNLISETLKSISSITIREFPRKDKSIMHIGLSETGFMRFFQLLRLMADKPHETAIKEVVMAYVGIKLGDKGSPYYIRKESYQDFIYLLFASMGFKVTTRRSIMGSNNISIISIRPRVTKQYIVTTLMKTSCSKNEAEKLITSAFDLLNFMVSVSDFRDYQSYRQYRNYCPRYFYAGSPEGEETIICDSEPISILDRIDTRGIFSAYTINEMMDTDIFSPENKAFKNNLSRFIESGDITGEDIFCAMPYNILDRIITNAGTCTVSIGDMLDNITTQSDCNMTNEITDMINASLKNTISKDNNMLVSQALDSVANRSKQTIGDLRQSSCKMALLFKNLATSIYTIERIFNAKVCDDVKASMLEKYKAFTDISMSLYKDLIAMENLKAMLYIIRRSGCRIDDAQITTDDLVKSYSLIRPKILSMINYYNEMSRGYFEHMKKNLNMTDGDSVSFDDE.

Residues 615–697 (SPEGEETIIC…ILDRIITNAG (83 aa)) constitute a propeptide that is removed on maturation.

Belongs to the orthopxvirus protein OPG136 family. As to quaternary structure, interacts with P39/A4. The precursor is cleaved by OPG083 to give rise to the 62 kDa mature protein during virion maturation. Proteolytic cleavage of major core proteins OPG136, OPG129, and OPG098, which occurs at a late stage of core formation, is required for production of infectious mature virions (MV).

Its subcellular location is the virion. Functionally, core protein 4a is the most abundant virion protein. Major component of the virion core that undergoes proteolytic processing during the immature virion (IV) to mature virion (MV) transition. The polypeptide is Major core protein OPG136 precursor (OPG136) (Cynomys gunnisoni (Gunnison's prairie dog)).